A 461-amino-acid polypeptide reads, in one-letter code: Homogentisate 1,2-dioxygenase (461 aa).

The Fe cation site is built by histidine 341, glutamate 347, and histidine 377.

It belongs to the homogentisate dioxygenase family. It depends on Fe cation as a cofactor.

It carries out the reaction homogentisate + O2 = 4-maleylacetoacetate + H(+). It participates in amino-acid degradation; L-phenylalanine degradation; acetoacetate and fumarate from L-phenylalanine: step 4/6. The sequence is that of Homogentisate 1,2-dioxygenase (HGO) from Arabidopsis thaliana (Mouse-ear cress).